A 524-amino-acid polypeptide reads, in one-letter code: Phosphoenolpyruvate carboxykinase (ATP) (524 aa).

Arg-52, Tyr-188, and Lys-194 together coordinate substrate. ATP-binding positions include Lys-194, His-213, and 229–237 (GLSGTGKTT). Mn(2+) contacts are provided by Lys-194 and His-213. Mn(2+) is bound at residue Asp-250. The ATP site is built by Glu-278, Arg-314, and Thr-439. Arg-314 provides a ligand contact to substrate.

Belongs to the phosphoenolpyruvate carboxykinase (ATP) family. The cofactor is Mn(2+).

It localises to the cytoplasm. The enzyme catalyses oxaloacetate + ATP = phosphoenolpyruvate + ADP + CO2. It participates in carbohydrate biosynthesis; gluconeogenesis. Involved in the gluconeogenesis. Catalyzes the conversion of oxaloacetate (OAA) to phosphoenolpyruvate (PEP) through direct phosphoryl transfer between the nucleoside triphosphate and OAA. This Campylobacter jejuni subsp. doylei (strain ATCC BAA-1458 / RM4099 / 269.97) protein is Phosphoenolpyruvate carboxykinase (ATP).